The primary structure comprises 374 residues: UPF0754 membrane protein SAB1779c (374 aa).

2 consecutive transmembrane segments (helical) span residues 4–24 (LFII…TNVI) and 354–374 (SLGF…AIFV).

This sequence belongs to the UPF0754 family.

The protein localises to the cell membrane. The sequence is that of UPF0754 membrane protein SAB1779c from Staphylococcus aureus (strain bovine RF122 / ET3-1).